A 703-amino-acid polypeptide reads, in one-letter code: Protein teflon (703 aa).

A C2H2-type 1 zinc finger spans residues 32–55; sequence MFCHFCKDIFTHLPEFMRHLQWSH. Disordered regions lie at residues 78–111, 138–161, and 339–434; these read TSEDDVQSQANSCSSGDSGLAGEMEDADGEPGSS, SHEQSYSKTPPDSRTEGFRCARKP, and SQQP…SKLE. 2 stretches are compositionally biased toward polar residues: residues 84–94 and 138–147; these read QSQANSCSSGD and SHEQSYSKTP. Residues 148–161 show a composition bias toward basic and acidic residues; the sequence is PDSRTEGFRCARKP. Composition is skewed to polar residues over residues 339-352 and 364-373; these read SQQPSELNTTNNAV and SLTVISSSPI. 2 consecutive C2H2-type zinc fingers follow at residues 649–672 and 677–700; these read YFCECCEEIFPNEARYKKHVQSVH and FTCSECGKSFKRLYFYEKHLKTVH.

This sequence belongs to the Teflon family.

The protein localises to the nucleus. It localises to the chromosome. Its function is as follows. Specifically required in males for proper segregation of autosomal bivalents at meiosis I. Expression is required in the male germ line prior to spermatocyte stage S4. May have a role as a bridging molecule maintaining adhesion to hold autosome bivalents together via heterochromatic connections. In Drosophila pseudoobscura pseudoobscura (Fruit fly), this protein is Protein teflon.